Reading from the N-terminus, the 253-residue chain is Triosephosphate isomerase, cytosolic (253 aa).

Substrate is bound by residues asparagine 10 and lysine 12. Histidine 96 acts as the Electrophile in catalysis. Glutamate 166 serves as the catalytic Proton acceptor.

It belongs to the triosephosphate isomerase family. Homodimer.

The protein localises to the cytoplasm. It carries out the reaction D-glyceraldehyde 3-phosphate = dihydroxyacetone phosphate. Its pathway is carbohydrate biosynthesis; gluconeogenesis. The protein operates within carbohydrate degradation; glycolysis; D-glyceraldehyde 3-phosphate from glycerone phosphate: step 1/1. The chain is Triosephosphate isomerase, cytosolic (TPI) from Oryza sativa subsp. japonica (Rice).